Here is a 641-residue protein sequence, read N- to C-terminus: MATAAGMGIGAACLVAPQVRPGRRLRLQRVRRRCVAELSRDGGSAQRPLAPAPLVKQPVLPTFLVPTSTPPAPTQSPAPAPTPPPLPDSGVGEIEPDLEGLTEDSIDKTIFVASEQESEIMDVKEQAQAKVTRSVVFVTGEASPYAKSGGLGDVCGSLPIALALRGHRVMVVMPRYMNGALNKNFANAFYTEKHIKIPCFGGEHEVTFFHEYRDSVDWVFVDHPSYHRPGNLYGDNFGAFGDNQFRYTLLCYAACEAPLILELGGYIYGQKCMFVVNDWHASLVPVLLAAKYRPYGVYRDARSVLVIHNLAHQGVEPASTYPDLGLPPEWYGALEWVFPEWARRHALDKGEAVNFLKGAVVTADRIVTVSQGYSWEVTTAEGGQGLNELLSSRKSVLNGIVNGIDINDWNPSTDKFLPYHYSVDDLSGKAKCKAELQEELGLPIRPDVPLIGFIGRLDYQKGIDLIKLAIPDLMRDNIQFVMLGSGDPGFEGWMRSTESGYRDKFRGWVGFSVPVSHRITAGCDILLMPSRFEPCGLNQLYAMQYGTVPVVHGTGGLRDTVENFNPFAEKGEQGTGWAFSPLTIEKMLWALRMAISTYREHKSSWEGLMKRGMSSDFTWDHAASQYEQIFEWAFMDQPYVM.

The N-terminal 113 residues, 1-113, are a transit peptide targeting the chloroplast; sequence MATAAGMGIG…DSIDKTIFVA (113 aa). The disordered stretch occupies residues 62 to 96; sequence TFLVPTSTPPAPTQSPAPAPTPPPLPDSGVGEIEP. The span at 68–87 shows a compositional bias: pro residues; that stretch reads STPPAPTQSPAPAPTPPPLP. Lysine 147 is an ADP-alpha-D-glucose binding site.

This sequence belongs to the glycosyltransferase 1 family. Bacterial/plant glycogen synthase subfamily.

It localises to the plastid. Its subcellular location is the chloroplast. It is found in the amyloplast. The enzyme catalyses [(1-&gt;4)-alpha-D-glucosyl](n) + ADP-alpha-D-glucose = [(1-&gt;4)-alpha-D-glucosyl](n+1) + ADP + H(+). It participates in glycan biosynthesis; starch biosynthesis. In Oryza sativa subsp. indica (Rice), this protein is Soluble starch synthase 1, chloroplastic/amyloplastic.